Here is a 255-residue protein sequence, read N- to C-terminus: Hydroxyacylglutathione hydrolase (255 aa).

7 residues coordinate Zn(2+): histidine 56, histidine 58, aspartate 60, histidine 61, histidine 114, aspartate 133, and histidine 171.

Belongs to the metallo-beta-lactamase superfamily. Glyoxalase II family. As to quaternary structure, monomer. Zn(2+) is required as a cofactor.

It carries out the reaction an S-(2-hydroxyacyl)glutathione + H2O = a 2-hydroxy carboxylate + glutathione + H(+). It participates in secondary metabolite metabolism; methylglyoxal degradation; (R)-lactate from methylglyoxal: step 2/2. Its function is as follows. Thiolesterase that catalyzes the hydrolysis of S-D-lactoyl-glutathione to form glutathione and D-lactic acid. The sequence is that of Hydroxyacylglutathione hydrolase from Roseobacter denitrificans (strain ATCC 33942 / OCh 114) (Erythrobacter sp. (strain OCh 114)).